The following is a 307-amino-acid chain: tRNA dimethylallyltransferase (307 aa).

7 to 14 (GPTAGGKT) is a binding site for ATP. Residue 9–14 (TAGGKT) participates in substrate binding. An interaction with substrate tRNA region spans residues 32–35 (DSRQ).

This sequence belongs to the IPP transferase family. Monomer. It depends on Mg(2+) as a cofactor.

The catalysed reaction is adenosine(37) in tRNA + dimethylallyl diphosphate = N(6)-dimethylallyladenosine(37) in tRNA + diphosphate. Functionally, catalyzes the transfer of a dimethylallyl group onto the adenine at position 37 in tRNAs that read codons beginning with uridine, leading to the formation of N6-(dimethylallyl)adenosine (i(6)A). The sequence is that of tRNA dimethylallyltransferase from Elusimicrobium minutum (strain Pei191).